A 273-amino-acid polypeptide reads, in one-letter code: Dermonecrotic toxin LapSicTox-alphaIB1b3 (273 aa).

Residue His-5 is part of the active site. Mg(2+) is bound by residues Glu-25 and Asp-27. His-41 serves as the catalytic Nucleophile. 2 disulfide bridges follow: Cys-45/Cys-51 and Cys-47/Cys-190. Asp-85 provides a ligand contact to Mg(2+). An N-linked (GlcNAc...) asparagine glycan is attached at Asn-250.

The protein belongs to the arthropod phospholipase D family. Class II subfamily. Requires Mg(2+) as cofactor. In terms of tissue distribution, expressed by the venom gland.

It localises to the secreted. The catalysed reaction is an N-(acyl)-sphingosylphosphocholine = an N-(acyl)-sphingosyl-1,3-cyclic phosphate + choline. The enzyme catalyses an N-(acyl)-sphingosylphosphoethanolamine = an N-(acyl)-sphingosyl-1,3-cyclic phosphate + ethanolamine. It carries out the reaction a 1-acyl-sn-glycero-3-phosphocholine = a 1-acyl-sn-glycero-2,3-cyclic phosphate + choline. It catalyses the reaction a 1-acyl-sn-glycero-3-phosphoethanolamine = a 1-acyl-sn-glycero-2,3-cyclic phosphate + ethanolamine. Its function is as follows. Dermonecrotic toxins cleave the phosphodiester linkage between the phosphate and headgroup of certain phospholipids (sphingolipid and lysolipid substrates), forming an alcohol (often choline) and a cyclic phosphate. This toxin acts on sphingomyelin (SM). It may also act on ceramide phosphoethanolamine (CPE), lysophosphatidylcholine (LPC) and lysophosphatidylethanolamine (LPE), but not on lysophosphatidylserine (LPS), and lysophosphatidylglycerol (LPG). It acts by transphosphatidylation, releasing exclusively cyclic phosphate products as second products. Induces dermonecrosis, hemolysis, increased vascular permeability, edema, inflammatory response, and platelet aggregation. This Loxosceles apachea (Apache recluse spider) protein is Dermonecrotic toxin LapSicTox-alphaIB1b3.